The following is a 662-amino-acid chain: Polyunsaturated fatty acid (12S)/(13S)-lipoxygenase, epidermal-type (662 aa).

The PLAT domain maps to 2–114 (VKYKILVATG…TICLTEGTAL (113 aa)). The 548-residue stretch at 115-662 (KVTDDTQNLF…PSLVENSVTI (548 aa)) folds into the Lipoxygenase domain. Fe cation is bound by residues His360, His365, His540, and Ile662.

This sequence belongs to the lipoxygenase family. The cofactor is Fe cation. Expressed in epidermis.

Its subcellular location is the cytoplasm. It carries out the reaction (5Z,8Z,11Z,14Z)-eicosatetraenoate + O2 = (12S)-hydroperoxy-(5Z,8Z,10E,14Z)-eicosatetraenoate. The enzyme catalyses 1-O-methyl-(9Z,12Z)-octadecadienoate + O2 = 1-O-methyl-(13S)-hydroperoxy-(9Z,11E)-octadecadienoate. The catalysed reaction is (8Z,11Z,14Z)-eicosatrienoate + O2 = (12S)-hydroperoxy-(8Z,10E,14Z)-eicosatrienoate. It catalyses the reaction (5Z,8Z,11Z)-eicosatrienoate + O2 = (12S)-hydroperoxy-(5Z,8Z,10E)-eicosatrienoate. It carries out the reaction 1-O-methyl-(5Z,8Z,11Z,14Z)-eicosatetraenoate + O2 = 1-O-methyl-(12S)-hydroperoxy-(5Z,8Z,10E,14Z)-eicosatetraenoate. The enzyme catalyses (9Z,12Z)-octadecadienoate + O2 = (13S)-hydroperoxy-(9Z,11E)-octadecadienoate. The catalysed reaction is (4Z,7Z,10Z,13Z,16Z,19Z)-docosahexaenoate + O2 = (14S)-hydroperoxy-(4Z,7Z,10Z,12E,16Z,19Z)-docosahexaenoate. It participates in lipid metabolism; hydroperoxy eicosatetraenoic acid biosynthesis. Arachidonate 12-lipoxygenase activity is decreased when the pH decreases from 7.4 to 6.0. Catalyzes the regio and stereo-specific incorporation of a single molecule of dioxygen into free and esterified polyunsaturated fatty acids generating lipid hydroperoxides that can be further reduced to the corresponding hydroxy species. Shows increasing catalytic activity within the series arachidonic acid &lt; 5,8,11-eicosatrienoic acid &lt; linoleic acid &lt; 8,11,14-eicosatrienoic acid. In Mus musculus (Mouse), this protein is Polyunsaturated fatty acid (12S)/(13S)-lipoxygenase, epidermal-type.